The primary structure comprises 1167 residues: Phenyloxazoline synthase MbtB (1167 aa).

The region spanning 2-78 is the Carrier 1 domain; sequence EAVVTSSQTV…AWTRLVGERT (77 aa). The residue at position 39 (serine 39) is an O-(pantetheine 4'-phosphoryl)serine. The segment at 78–100 is disordered; the sequence is TAESPGAATQSGDTAASAGDPDA. Residues 98–390 form a condensation/cyclization region; that stretch reads PDAPFPLAPI…SSLMLDVDFT (293 aa). The tract at residues 575–967 is adenylation; that stretch reads TYAELRERVL…RIAGVEAAVA (393 aa). A Carrier 2 domain is found at 1054 to 1130; that stretch reads VPSTALERAL…ALARRLVDHE (77 aa). Serine 1089 is subject to O-(pantetheine 4'-phosphoryl)serine.

This sequence belongs to the ATP-dependent AMP-binding enzyme family. MbtB subfamily. Pantetheine 4'-phosphate serves as cofactor. 4'-phosphopantetheine is transferred from CoA to a specific serine in each of the two carrier protein domains, leading to their activation from apo to holo forms.

It functions in the pathway siderophore biosynthesis; mycobactin biosynthesis. Involved in the initial steps of the mycobactin biosynthetic pathway. Putatively couples activated salicylic acid with serine or threonine and cyclizes this precursor to the hydroxyphenyloxazoline ring system present in this class of siderophores. The chain is Phenyloxazoline synthase MbtB (mbtB) from Mycobacterium sp. (strain MCS).